The following is a 55-amino-acid chain: Large ribosomal subunit protein bL33 (55 aa).

The protein belongs to the bacterial ribosomal protein bL33 family.

The chain is Large ribosomal subunit protein bL33 from Parvibaculum lavamentivorans (strain DS-1 / DSM 13023 / NCIMB 13966).